The primary structure comprises 688 residues: Sodium channel and clathrin linker 1 (688 aa).

At Ala-2 the chain carries N-acetylalanine. Residues 59–673 (LIAEYEKHLE…SASQQLSVIT (615 aa)) are a coiled coil. Position 681 is a phosphoserine (Ser-681).

In terms of assembly, interacts with SCN10A and clathrin. Identified in a complex containing SCN10A, clathrin and SCLT1. Detected in small neurons in dorsal root ganglia. Detected in C-type fibers of sciatic nerve (at protein level).

It is found in the cytoplasm. Its subcellular location is the cytoskeleton. It localises to the microtubule organizing center. The protein resides in the centrosome. The protein localises to the centriole. In terms of biological role, adapter protein that links SCN10A to clathrin. Regulates SCN10A channel activity, possibly by promoting channel internalization. The polypeptide is Sodium channel and clathrin linker 1 (Sclt1) (Rattus norvegicus (Rat)).